Reading from the N-terminus, the 194-residue chain is Ion-translocating oxidoreductase complex subunit A (194 aa).

The next 6 helical transmembrane spans lie at 4 to 24 (LALILVSAILVNNFVLVQFLG), 39 to 59 (IGLSLATTFVLTLAAICSYIL), 71 to 91 (FLRTIGFILVIAVVVQFTEML), 102 to 122 (VLGIFLPLITTNCIVLGVALL), 135 to 155 (TTQGFGAGLGFSLVLVLFAAL), and 172 to 192 (AIGMITAGLMSLAFMGFSGLI).

Belongs to the NqrDE/RnfAE family. As to quaternary structure, the complex is composed of six subunits: RnfA, RnfB, RnfC, RnfD, RnfE and RnfG.

It localises to the cell inner membrane. Its function is as follows. Part of a membrane-bound complex that couples electron transfer with translocation of ions across the membrane. The protein is Ion-translocating oxidoreductase complex subunit A of Pseudomonas paraeruginosa (strain DSM 24068 / PA7) (Pseudomonas aeruginosa (strain PA7)).